Here is a 156-residue protein sequence, read N- to C-terminus: MKGLIQRVSEASVAVDGETIARIGPGLLLLLGVERNDTLNEAKELCRKVLSYRVFPDEQGRMNVNVQAAGGSLLVVPQFTLAADTSSGTRPGFSLAAAPELANRLYGDFVAEASGLLGAGRVGTGEFGADMKVALINDGPVTFMLESGQRGSCTKM.

The Gly-cisPro motif, important for rejection of L-amino acids signature appears at 139–140; sequence GP.

This sequence belongs to the DTD family. In terms of assembly, homodimer.

Its subcellular location is the cytoplasm. It carries out the reaction glycyl-tRNA(Ala) + H2O = tRNA(Ala) + glycine + H(+). It catalyses the reaction a D-aminoacyl-tRNA + H2O = a tRNA + a D-alpha-amino acid + H(+). Functionally, an aminoacyl-tRNA editing enzyme that deacylates mischarged D-aminoacyl-tRNAs. Also deacylates mischarged glycyl-tRNA(Ala), protecting cells against glycine mischarging by AlaRS. Acts via tRNA-based rather than protein-based catalysis; rejects L-amino acids rather than detecting D-amino acids in the active site. By recycling D-aminoacyl-tRNA to D-amino acids and free tRNA molecules, this enzyme counteracts the toxicity associated with the formation of D-aminoacyl-tRNA entities in vivo and helps enforce protein L-homochirality. The chain is D-aminoacyl-tRNA deacylase from Marinobacter nauticus (strain ATCC 700491 / DSM 11845 / VT8) (Marinobacter aquaeolei).